The chain runs to 130 residues: Small ribosomal subunit protein uS9 (130 aa).

Residues 105 to 130 (TRDSRMKERKKPGLRGARRAPQFSKR) form a disordered region. Basic residues predominate over residues 111–130 (KERKKPGLRGARRAPQFSKR).

This sequence belongs to the universal ribosomal protein uS9 family.

This Lysinibacillus sphaericus (strain C3-41) protein is Small ribosomal subunit protein uS9.